We begin with the raw amino-acid sequence, 748 residues long: Junctophilin-3 (748 aa).

The Cytoplasmic segment spans residues 1 to 727; it reads MSSGGRFNFD…LKSSTGSAPI (727 aa). 6 MORN repeats span residues 15-37, 39-60, 61-82, 83-105, 107-129, and 130-152; these read YCGG…KGQG, YTGS…SGNT, YQGT…GKWV, YKGE…GNGA, YEGT…DGGT, and YQGQ…PYGM. Residues 230–259 form a disordered region; sequence SKSSLASQRSKQSSFRSEAGMSTVSSTASD. Residues 231-244 show a composition bias toward low complexity; it reads KSSLASQRSKQSSF. The span at 249-259 shows a compositional bias: polar residues; sequence GMSTVSSTASD. 2 MORN repeats span residues 288–310 and 311–333; these read YVGE…DGLK and YEGE…DGTK. The interval 416 to 496 is disordered; it reads AKEFSPSFQH…TPPPAPAARN (81 aa). Position 440 is a phosphoserine (Ser-440). Polar residues predominate over residues 448–457; it reads STGTPLQQES. Residue Thr-451 is modified to Phosphothreonine. Ser-457 is modified (phosphoserine). The residue at position 471 (Thr-471) is a Phosphothreonine. A phosphoserine mark is found at Ser-475 and Ser-506. Disordered stretches follow at residues 526-597 and 624-649; these read CARS…SPGG and HPQK…EDRG. Positions 639 to 649 are enriched in basic and acidic residues; it reads LGDDHRPEDRG. 2 positions are modified to phosphoserine: Ser-703 and Ser-710. A helical; Anchor for type IV membrane protein membrane pass occupies residues 728–748; the sequence is LVVMVILLNIGVAILFINFFI.

Belongs to the junctophilin family. As to expression, specifically expressed in brain.

It localises to the cell membrane. The protein resides in the endoplasmic reticulum membrane. Junctophilins contribute to the formation of junctional membrane complexes (JMCs) which link the plasma membrane with the endoplasmic or sarcoplasmic reticulum in excitable cells. Provides a structural foundation for functional cross-talk between the cell surface and intracellular calcium release channels. JPH3 is brain-specific and appears to have an active role in certain neurons involved in motor coordination and memory. The protein is Junctophilin-3 (JPH3) of Homo sapiens (Human).